The sequence spans 351 residues: Heat shock factor protein HSF30 (351 aa).

The DNA-binding element occupies 29–123 (PPPFLSKTYE…LLKTIKRRRN (95 aa)).

The protein belongs to the HSF family. As to quaternary structure, homotrimer. In terms of processing, exhibits temperature-dependent phosphorylation.

It is found in the nucleus. In terms of biological role, DNA-binding protein that specifically binds heat shock promoter elements (HSE) and activates transcription. The sequence is that of Heat shock factor protein HSF30 (HSF30) from Solanum peruvianum (Peruvian tomato).